A 344-amino-acid polypeptide reads, in one-letter code: Heat-inducible transcription repressor HrcA (344 aa).

Belongs to the HrcA family.

In terms of biological role, negative regulator of class I heat shock genes (grpE-dnaK-dnaJ and groELS operons). Prevents heat-shock induction of these operons. The sequence is that of Heat-inducible transcription repressor HrcA from Aster yellows witches'-broom phytoplasma (strain AYWB).